The following is a 345-amino-acid chain: MSSKGVISVLVIDDSAHNRRTLSTMLESEPDVRVVDRAADGEEGLKKVVDLKPDVVTLDLEMPKLGGYTFLRLLMRTAPTPVIVISSYSHRSDVFKALELGAFDFIAKPQHPTFEAMEALRVELLEKVRAARHVRPGYRHAAPGARAMAVAGEPPLVVAVGASTGGPPAVQRVLEGLAVEPTPCVLVCQHMPPQFTRAFADRLDRIGPFSVTEARDGDLVQPGHVYIAPGGRHMVVAERGSRLELQTPPPTPVDKYAPCVDRLFVSMAQVLGAKALGVVLTGMGADGAEGARAVHRAGGEVWAQSEETSVVFGMPGEAIATGAVKRVIPLGDIGPALAALARRRR.

One can recognise a Response regulatory domain in the interval 8–123; that stretch reads SVLVIDDSAH…FEAMEALRVE (116 aa). Asp-59 is subject to 4-aspartylphosphate. One can recognise a CheB-type methylesterase domain in the interval 151–344; that stretch reads AGEPPLVVAV…PALAALARRR (194 aa). Residues Ser-163, His-190, and Asp-286 contribute to the active site.

This sequence belongs to the CheB family. Phosphorylated by CheA. Phosphorylation of the N-terminal regulatory domain activates the methylesterase activity.

Its subcellular location is the cytoplasm. It catalyses the reaction [protein]-L-glutamate 5-O-methyl ester + H2O = L-glutamyl-[protein] + methanol + H(+). The enzyme catalyses L-glutaminyl-[protein] + H2O = L-glutamyl-[protein] + NH4(+). In terms of biological role, involved in chemotaxis. Part of a chemotaxis signal transduction system that modulates chemotaxis in response to various stimuli. Catalyzes the demethylation of specific methylglutamate residues introduced into the chemoreceptors (methyl-accepting chemotaxis proteins or MCP) by CheR. Also mediates the irreversible deamidation of specific glutamine residues to glutamic acid. This is Protein-glutamate methylesterase/protein-glutamine glutaminase 1 from Myxococcus xanthus (strain DK1622).